Here is a 710-residue protein sequence, read N- to C-terminus: Conserved oligomeric Golgi complex subunit 2 (710 aa).

Belongs to the COG2 family. Component of the conserved oligomeric Golgi complex which is composed of eight different subunits and is required for normal Golgi morphology and localization.

The protein resides in the golgi apparatus membrane. Its function is as follows. Required for normal Golgi morphology and function. The polypeptide is Conserved oligomeric Golgi complex subunit 2 (Drosophila melanogaster (Fruit fly)).